The sequence spans 189 residues: Ribosome maturation factor RimM (189 aa).

A PRC barrel domain is found at 96–169 (EDEFFQTDLI…TLLVEPYAAG (74 aa)). The interval 170–189 (LIADDEDERPQNEKKKPKKS) is disordered.

Belongs to the RimM family. Binds ribosomal protein uS19.

The protein localises to the cytoplasm. Its function is as follows. An accessory protein needed during the final step in the assembly of 30S ribosomal subunit, possibly for assembly of the head region. Essential for efficient processing of 16S rRNA. May be needed both before and after RbfA during the maturation of 16S rRNA. It has affinity for free ribosomal 30S subunits but not for 70S ribosomes. The chain is Ribosome maturation factor RimM from Brucella anthropi (strain ATCC 49188 / DSM 6882 / CCUG 24695 / JCM 21032 / LMG 3331 / NBRC 15819 / NCTC 12168 / Alc 37) (Ochrobactrum anthropi).